An 887-amino-acid polypeptide reads, in one-letter code: 3-hydroxy-3-methylglutaryl-coenzyme A reductase (887 aa).

At 1–9 (MLSRLFRMH) the chain is on the cytoplasmic side. The helical transmembrane segment at 10–39 (GLFVASHPWEVIVGTVTLTICMMSMNMFTG) threads the bilayer. Residues 40–56 (NNKICGWNYECPKFEED) are Lumenal-facing. Residues 57 to 78 (VLSSDIIILTITRCIAILYIYF) traverse the membrane as a helical segment. The 158-residue stretch at 61–218 (DIIILTITRC…MTFFPACVSL (158 aa)) folds into the SSD domain. The INSIG-binding motif motif lies at 75-78 (YIYF). Over 79-89 (QFQNLRQLGSK) the chain is Cytoplasmic. Residue K89 forms a Glycyl lysine isopeptide (Lys-Gly) (interchain with G-Cter in ubiquitin) linkage. A helical membrane pass occupies residues 90 to 114 (YILGIAGLFTIFSSFVFSTVVIHFL). Residues 115–123 (DKELTGLNE) are Lumenal-facing. A helical membrane pass occupies residues 124-149 (ALPFFLLLIDLSRASALAKFALSSNS). Residues 150–159 (QDEVRENIAR) are Cytoplasmic-facing. Residues 160-187 (GMAILGPTFTLDALVECLVIGVGTMSGV) form a helical membrane-spanning segment. The Lumenal portion of the chain corresponds to 188 to 191 (RQLE). The chain crosses the membrane as a helical span at residues 192–220 (IMCCFGCMSVLANYFVFMTFFPACVSLVL). Residues 221 to 248 (ELSRESREGRPIWQLSHFARVLEEEENK) lie on the Cytoplasmic side of the membrane. Residue K248 forms a Glycyl lysine isopeptide (Lys-Gly) (interchain with G-Cter in ubiquitin) linkage. A helical transmembrane segment spans residues 249-275 (PNPVTQRVKMIMSLGLVLVHAHSRWIA). At 276–314 (DPSPQNSTAEQAKVSLGLDEDVSKRIEPSVSLWQFYLSK) the chain is on the lumenal side. N281 is a glycosylation site (N-linked (GlcNAc...) asparagine). A helical transmembrane segment spans residues 315 to 339 (MISMDIEQVITLSLAFLLAVKYIFF). The Cytoplasmic segment spans residues 340–887 (EQAETESTLS…LQGTCTKKAA (548 aa)). Catalysis depends on charge relay system residues E558, K690, and D766. The active-site Proton donor is H865. S871 carries the phosphoserine modification.

The protein belongs to the HMG-CoA reductase family. Homotetramer. Homodimer. Interacts (via its SSD) with INSIG1; the interaction, accelerated by sterols, leads to the recruitment of HMGCR to AMFR/gp78 for its ubiquitination by the sterol-mediated ERAD pathway. Interacts with UBIAD1. Undergoes sterol-mediated ubiquitination and ER-associated degradation (ERAD). Accumulation of sterols in the endoplasmic reticulum (ER) membrane, triggers binding of the reductase to the ER membrane protein INSIG1 or INSIG2. The INSIG1 binding leads to the recruitment of the ubiquitin ligase, AMFR/gp78, RNF139 or RNF145, initiating ubiquitination of the reductase. The ubiquitinated reductase is then extracted from the ER membrane and delivered to cytosolic 26S proteosomes by a mechanism probably mediated by the ATPase Valosin-containing protein VCP/p97. The INSIG2-binding leads to the recruitment of the ubiquitin ligase RNF139, initiating ubiquitination of the reductase. Lys-248 is the main site of ubiquitination. Ubiquitination is enhanced by the presence of a geranylgeranylated protein. Post-translationally, N-glycosylated. Deglycosylated by NGLY1 on release from the endoplasmic reticulum (ER) in a sterol-mediated manner. In terms of processing, phosphorylated. Phosphorylation at Ser-871 reduces the catalytic activity.

It localises to the endoplasmic reticulum membrane. The protein resides in the peroxisome membrane. It catalyses the reaction (R)-mevalonate + 2 NADP(+) + CoA = (3S)-3-hydroxy-3-methylglutaryl-CoA + 2 NADPH + 2 H(+). It participates in metabolic intermediate biosynthesis; (R)-mevalonate biosynthesis; (R)-mevalonate from acetyl-CoA: step 3/3. Regulated by a negative feedback mechanism through sterols and non-sterol metabolites derived from mevalonate. Phosphorylation at Ser-871 down-regulates the catalytic activity. Catalyzes the conversion of (3S)-hydroxy-3-methylglutaryl-CoA (HMG-CoA) to mevalonic acid, the rate-limiting step in the synthesis of cholesterol and other isoprenoids, thus plays a critical role in cellular cholesterol homeostasis. The sequence is that of 3-hydroxy-3-methylglutaryl-coenzyme A reductase (Hmgcr) from Mus musculus (Mouse).